A 493-amino-acid polypeptide reads, in one-letter code: NAD(P)H-quinone oxidoreductase chain 4, chloroplastic (493 aa).

Transmembrane regions (helical) follow at residues 4–24 (FPWLSIIILFPLFAAFFIPLL), 34–54 (WYTLGICLLDFLVMSYIFGYY), 87–107 (MGLILLTGLVTTLAVLAAWPI), 111–131 (PKLFYFLMLVMYSGQIGLFTS), 134–154 (LFLFFLMWELELIPIYLLISL), 167–187 (FIFYTAIGSLFLFIATFTVCF), 212–232 (ILYLGFGFAYAVKLPIIPFHT), 242–262 (HYSTCMLLAGILLKMGGYGWI), 276–296 (FAPWLVILGTVQIIYAASVCL), 313–333 (MGFVLIGICSFTNIGLSGAIC), 334–354 (QMISHGLIGASLFFLAGTTYD), 385–405 (SLALPTMSGFVAEMMIFLGII), 417–437 (FIILFQALGVILTPIYLLSML), and 462–482 (VFIIVSLFIPVIIIGLYPNIL).

It belongs to the complex I subunit 4 family.

The protein localises to the plastid. It localises to the chloroplast thylakoid membrane. It carries out the reaction a plastoquinone + NADH + (n+1) H(+)(in) = a plastoquinol + NAD(+) + n H(+)(out). The catalysed reaction is a plastoquinone + NADPH + (n+1) H(+)(in) = a plastoquinol + NADP(+) + n H(+)(out). The sequence is that of NAD(P)H-quinone oxidoreductase chain 4, chloroplastic from Chara vulgaris (Common stonewort).